The chain runs to 266 residues: uncharacterized protein (266 aa).

Positions 1-22 (MGYFKRVVLYIIVMVVSVFIIG) are cleaved as a signal peptide. A lipid anchor (N-palmitoyl cysteine) is attached at C23. C23 is lipidated: S-diacylglycerol cysteine.

This sequence belongs to the staphylococcal tandem lipoprotein family.

The protein localises to the cell membrane. This is an uncharacterized protein from Staphylococcus aureus (strain N315).